Here is a 179-residue protein sequence, read N- to C-terminus: Protein GrpE (179 aa).

The segment at 1-22 is disordered; the sequence is MTDNNIENNEEEIRKAPSANDR. A compositionally biased stretch (basic and acidic residues) spans 11 to 22; that stretch reads EEIRKAPSANDR.

It belongs to the GrpE family. Homodimer.

It is found in the cytoplasm. Functionally, participates actively in the response to hyperosmotic and heat shock by preventing the aggregation of stress-denatured proteins, in association with DnaK and GrpE. It is the nucleotide exchange factor for DnaK and may function as a thermosensor. Unfolded proteins bind initially to DnaJ; upon interaction with the DnaJ-bound protein, DnaK hydrolyzes its bound ATP, resulting in the formation of a stable complex. GrpE releases ADP from DnaK; ATP binding to DnaK triggers the release of the substrate protein, thus completing the reaction cycle. Several rounds of ATP-dependent interactions between DnaJ, DnaK and GrpE are required for fully efficient folding. The protein is Protein GrpE of Rickettsia canadensis (strain McKiel).